A 135-amino-acid polypeptide reads, in one-letter code: Large ribosomal subunit protein uL16c (135 aa).

It belongs to the universal ribosomal protein uL16 family. As to quaternary structure, part of the 50S ribosomal subunit.

The protein localises to the plastid. The protein resides in the chloroplast. This chain is Large ribosomal subunit protein uL16c, found in Nandina domestica (Heavenly bamboo).